The primary structure comprises 454 residues: Bifunctional protein GlmU (454 aa).

A pyrophosphorylase region spans residues 1-226; that stretch reads MSTTVIILAA…AFEVEGVNDR (226 aa). UDP-N-acetyl-alpha-D-glucosamine contacts are provided by residues 8 to 11, Lys-22, Gln-73, 78 to 79, 100 to 102, Gly-137, Glu-151, Asn-166, and Asn-224; these read LAAG, GT, and YGD. Asp-102 is a Mg(2+) binding site. A Mg(2+)-binding site is contributed by Asn-224. Residues 227–247 are linker; sequence LQLAALEREFQKQQAKELMQQ. An N-acetyltransferase region spans residues 248-454; the sequence is GVTFADPARF…NYQRPQKLKK (207 aa). Residues Arg-330 and Lys-348 each contribute to the UDP-N-acetyl-alpha-D-glucosamine site. Residue His-360 is the Proton acceptor of the active site. The UDP-N-acetyl-alpha-D-glucosamine site is built by Tyr-363 and Asn-374. Residues Ala-377, 383–384, Ser-402, Ala-420, and Arg-437 each bind acetyl-CoA; that span reads NY.

It in the N-terminal section; belongs to the N-acetylglucosamine-1-phosphate uridyltransferase family. In the C-terminal section; belongs to the transferase hexapeptide repeat family. In terms of assembly, homotrimer. It depends on Mg(2+) as a cofactor.

The protein localises to the cytoplasm. It carries out the reaction alpha-D-glucosamine 1-phosphate + acetyl-CoA = N-acetyl-alpha-D-glucosamine 1-phosphate + CoA + H(+). It catalyses the reaction N-acetyl-alpha-D-glucosamine 1-phosphate + UTP + H(+) = UDP-N-acetyl-alpha-D-glucosamine + diphosphate. The protein operates within nucleotide-sugar biosynthesis; UDP-N-acetyl-alpha-D-glucosamine biosynthesis; N-acetyl-alpha-D-glucosamine 1-phosphate from alpha-D-glucosamine 6-phosphate (route II): step 2/2. It participates in nucleotide-sugar biosynthesis; UDP-N-acetyl-alpha-D-glucosamine biosynthesis; UDP-N-acetyl-alpha-D-glucosamine from N-acetyl-alpha-D-glucosamine 1-phosphate: step 1/1. It functions in the pathway bacterial outer membrane biogenesis; LPS lipid A biosynthesis. Functionally, catalyzes the last two sequential reactions in the de novo biosynthetic pathway for UDP-N-acetylglucosamine (UDP-GlcNAc). The C-terminal domain catalyzes the transfer of acetyl group from acetyl coenzyme A to glucosamine-1-phosphate (GlcN-1-P) to produce N-acetylglucosamine-1-phosphate (GlcNAc-1-P), which is converted into UDP-GlcNAc by the transfer of uridine 5-monophosphate (from uridine 5-triphosphate), a reaction catalyzed by the N-terminal domain. In Acinetobacter baumannii (strain AYE), this protein is Bifunctional protein GlmU.